Consider the following 373-residue polypeptide: Probable tRNA sulfurtransferase (373 aa).

Residues 54–158 (NKNIEELSKV…NDVAYFYHKI (105 aa)) enclose the THUMP domain. ATP-binding positions include 176-177 (LF), 201-202 (NF), Lys256, Gly278, and Gln287.

The protein belongs to the ThiI family.

Its subcellular location is the cytoplasm. The catalysed reaction is [ThiI sulfur-carrier protein]-S-sulfanyl-L-cysteine + a uridine in tRNA + 2 reduced [2Fe-2S]-[ferredoxin] + ATP + H(+) = [ThiI sulfur-carrier protein]-L-cysteine + a 4-thiouridine in tRNA + 2 oxidized [2Fe-2S]-[ferredoxin] + AMP + diphosphate. It catalyses the reaction [ThiS sulfur-carrier protein]-C-terminal Gly-Gly-AMP + S-sulfanyl-L-cysteinyl-[cysteine desulfurase] + AH2 = [ThiS sulfur-carrier protein]-C-terminal-Gly-aminoethanethioate + L-cysteinyl-[cysteine desulfurase] + A + AMP + 2 H(+). It participates in cofactor biosynthesis; thiamine diphosphate biosynthesis. Functionally, catalyzes the ATP-dependent transfer of a sulfur to tRNA to produce 4-thiouridine in position 8 of tRNAs, which functions as a near-UV photosensor. Also catalyzes the transfer of sulfur to the sulfur carrier protein ThiS, forming ThiS-thiocarboxylate. This is a step in the synthesis of thiazole, in the thiamine biosynthesis pathway. The sulfur is donated as persulfide by IscS. The protein is Probable tRNA sulfurtransferase of Saccharolobus islandicus (strain M.14.25 / Kamchatka #1) (Sulfolobus islandicus).